We begin with the raw amino-acid sequence, 233 residues long: Glutathione S-transferase 2 (233 aa).

The region spanning 17–101 (QKMIIYDTPA…YIDALDGTPT (85 aa)) is the GST N-terminal domain. Glutathione contacts are provided by residues Y29, H58, V72, 85-86 (EC), and H133. One can recognise a GST C-terminal domain in the interval 106–233 (TPLEKGVIHM…KLLEIRSKSS (128 aa)).

Belongs to the GST superfamily. As to quaternary structure, homodimer.

The enzyme catalyses RX + glutathione = an S-substituted glutathione + a halide anion + H(+). The polypeptide is Glutathione S-transferase 2 (GTT2) (Saccharomyces cerevisiae (strain ATCC 204508 / S288c) (Baker's yeast)).